A 383-amino-acid polypeptide reads, in one-letter code: Acetylornithine deacetylase (383 aa).

Residue histidine 80 participates in Zn(2+) binding. Residue aspartate 82 is part of the active site. Zn(2+) is bound at residue aspartate 112. Residue glutamate 144 is part of the active site. The Zn(2+) site is built by glutamate 145, glutamate 169, and histidine 355.

Belongs to the peptidase M20A family. ArgE subfamily. In terms of assembly, homodimer. The cofactor is Zn(2+). It depends on Co(2+) as a cofactor. Glutathione is required as a cofactor.

The protein localises to the cytoplasm. The enzyme catalyses N(2)-acetyl-L-ornithine + H2O = L-ornithine + acetate. It functions in the pathway amino-acid biosynthesis; L-arginine biosynthesis; L-ornithine from N(2)-acetyl-L-ornithine (linear): step 1/1. Its function is as follows. Catalyzes the hydrolysis of the amide bond of N(2)-acetylated L-amino acids. Cleaves the acetyl group from N-acetyl-L-ornithine to form L-ornithine, an intermediate in L-arginine biosynthesis pathway, and a branchpoint in the synthesis of polyamines. The polypeptide is Acetylornithine deacetylase (Escherichia coli O139:H28 (strain E24377A / ETEC)).